Reading from the N-terminus, the 349-residue chain is Ribosomal RNA small subunit methyltransferase H 1 (349 aa).

Residues 79-81, D99, F129, D148, and Q155 each bind S-adenosyl-L-methionine; that span reads GGH.

This sequence belongs to the methyltransferase superfamily. RsmH family.

The protein localises to the cytoplasm. The catalysed reaction is cytidine(1402) in 16S rRNA + S-adenosyl-L-methionine = N(4)-methylcytidine(1402) in 16S rRNA + S-adenosyl-L-homocysteine + H(+). Its function is as follows. Specifically methylates the N4 position of cytidine in position 1402 (C1402) of 16S rRNA. The sequence is that of Ribosomal RNA small subunit methyltransferase H 1 from Agathobacter rectalis (strain ATCC 33656 / DSM 3377 / JCM 17463 / KCTC 5835 / VPI 0990) (Eubacterium rectale).